Reading from the N-terminus, the 138-residue chain is Holo-[acyl-carrier-protein] synthase (138 aa).

Mg(2+) contacts are provided by aspartate 11 and glutamate 65.

The protein belongs to the P-Pant transferase superfamily. AcpS family. Mg(2+) serves as cofactor.

The protein resides in the cytoplasm. The catalysed reaction is apo-[ACP] + CoA = holo-[ACP] + adenosine 3',5'-bisphosphate + H(+). Functionally, transfers the 4'-phosphopantetheine moiety from coenzyme A to a Ser of acyl-carrier-protein. The sequence is that of Holo-[acyl-carrier-protein] synthase from Ralstonia nicotianae (strain ATCC BAA-1114 / GMI1000) (Ralstonia solanacearum).